The chain runs to 479 residues: Anaerobic nitric oxide reductase flavorubredoxin (479 aa).

Residues 30-210 are zinc metallo-hydrolase; that stretch reads LRGSSYNSYL…PFSRLVTPKI (181 aa). Fe cation contacts are provided by H79, E81, D83, H147, D166, and H227. The 140-residue stretch at 254 to 393 folds into the Flavodoxin-like domain; it reads ITIFYDTMSN…LCREHGREIA (140 aa). Residues 260-264 and 342-369 contribute to the FMN site; these read TMSNN and AFGSHGWSGGAVDRLSTRLQDAGFEMSL. In terms of domain architecture, Rubredoxin-like spans 423–474; sequence GPRMQCSVCQWIYDPAKGEPMQDVAPGTPWSEVPDNFLCPECSLGKDVFEEL. Residues C428, C431, C461, and C464 each contribute to the Fe cation site.

In the N-terminal section; belongs to the zinc metallo-hydrolase group 3 family. As to quaternary structure, homotetramer. It depends on Fe cation as a cofactor. Requires FMN as cofactor.

The protein localises to the cytoplasm. It participates in nitrogen metabolism; nitric oxide reduction. Functionally, anaerobic nitric oxide reductase; uses NADH to detoxify nitric oxide (NO), protecting several 4Fe-4S NO-sensitive enzymes. Has at least 2 reductase partners, only one of which (NorW, flavorubredoxin reductase) has been identified. NO probably binds to the di-iron center; electrons enter from the NorW at rubredoxin and are transferred sequentially to the FMN center and the di-iron center. Also able to function as an aerobic oxygen reductase. In Shigella boydii serotype 4 (strain Sb227), this protein is Anaerobic nitric oxide reductase flavorubredoxin.